The primary structure comprises 127 residues: Glycine cleavage system H protein 2 (127 aa).

The Lipoyl-binding domain maps to 24–105 (SVTVGISDHA…PYGSWIFKLK (82 aa)). K65 is modified (N6-lipoyllysine).

It belongs to the GcvH family. The glycine cleavage system is composed of four proteins: P, T, L and H. (R)-lipoate is required as a cofactor.

The glycine cleavage system catalyzes the degradation of glycine. The H protein shuttles the methylamine group of glycine from the P protein to the T protein. In Pseudomonas putida (strain ATCC 47054 / DSM 6125 / CFBP 8728 / NCIMB 11950 / KT2440), this protein is Glycine cleavage system H protein 2.